A 294-amino-acid polypeptide reads, in one-letter code: N-acetylmuramic acid 6-phosphate etherase (294 aa).

The region spanning 54–217 (VIQSFEEEGR…STASMIGVGK (164 aa)) is the SIS domain. Residue E82 is the Proton donor of the active site. E113 is a catalytic residue.

The protein belongs to the GCKR-like family. MurNAc-6-P etherase subfamily. Homodimer.

The catalysed reaction is N-acetyl-D-muramate 6-phosphate + H2O = N-acetyl-D-glucosamine 6-phosphate + (R)-lactate. It functions in the pathway amino-sugar metabolism; N-acetylmuramate degradation. Functionally, specifically catalyzes the cleavage of the D-lactyl ether substituent of MurNAc 6-phosphate, producing GlcNAc 6-phosphate and D-lactate. This chain is N-acetylmuramic acid 6-phosphate etherase, found in Bacillus thuringiensis subsp. konkukian (strain 97-27).